A 124-amino-acid chain; its full sequence is Small ribosomal subunit protein uS12 (124 aa).

3-methylthioaspartic acid is present on Asp89. Residues 105–124 (QGVKNRKQARSRYGAKKEKS) form a disordered region. Residues 108 to 118 (KNRKQARSRYG) show a composition bias toward basic residues.

The protein belongs to the universal ribosomal protein uS12 family. As to quaternary structure, part of the 30S ribosomal subunit. Contacts proteins S8 and S17. May interact with IF1 in the 30S initiation complex.

Functionally, with S4 and S5 plays an important role in translational accuracy. In terms of biological role, interacts with and stabilizes bases of the 16S rRNA that are involved in tRNA selection in the A site and with the mRNA backbone. Located at the interface of the 30S and 50S subunits, it traverses the body of the 30S subunit contacting proteins on the other side and probably holding the rRNA structure together. The combined cluster of proteins S8, S12 and S17 appears to hold together the shoulder and platform of the 30S subunit. This Mycobacterium avium (strain 104) protein is Small ribosomal subunit protein uS12.